A 438-amino-acid chain; its full sequence is Aspartate--tRNA(Asp/Asn) ligase (438 aa).

Glu-176 is an L-aspartate binding site. Residues 198 to 201 (QLYK) form an aspartate region. L-aspartate is bound at residue Arg-220. ATP contacts are provided by residues 220–222 (RAE), 228–230 (RHL), and Glu-361. The Mg(2+) site is built by Glu-361 and Ser-364. Residues Ser-364 and Arg-368 each contribute to the L-aspartate site. 409-412 (GADR) contacts ATP.

It belongs to the class-II aminoacyl-tRNA synthetase family. Type 2 subfamily. In terms of assembly, homodimer. Mg(2+) serves as cofactor.

Its subcellular location is the cytoplasm. The enzyme catalyses tRNA(Asx) + L-aspartate + ATP = L-aspartyl-tRNA(Asx) + AMP + diphosphate. In terms of biological role, aspartyl-tRNA synthetase with relaxed tRNA specificity since it is able to aspartylate not only its cognate tRNA(Asp) but also tRNA(Asn). Reaction proceeds in two steps: L-aspartate is first activated by ATP to form Asp-AMP and then transferred to the acceptor end of tRNA(Asp/Asn). In Methanococcus vannielii (strain ATCC 35089 / DSM 1224 / JCM 13029 / OCM 148 / SB), this protein is Aspartate--tRNA(Asp/Asn) ligase.